Consider the following 320-residue polypeptide: Aspartate carbamoyltransferase catalytic subunit (320 aa).

R68 and T69 together coordinate carbamoyl phosphate. K96 contacts L-aspartate. Residues R118, H148, and Q151 each coordinate carbamoyl phosphate. Residues R181 and R236 each coordinate L-aspartate. Positions 277 and 278 each coordinate carbamoyl phosphate.

This sequence belongs to the aspartate/ornithine carbamoyltransferase superfamily. ATCase family. Heterododecamer (2C3:3R2) of six catalytic PyrB chains organized as two trimers (C3), and six regulatory PyrI chains organized as three dimers (R2).

It carries out the reaction carbamoyl phosphate + L-aspartate = N-carbamoyl-L-aspartate + phosphate + H(+). Its pathway is pyrimidine metabolism; UMP biosynthesis via de novo pathway; (S)-dihydroorotate from bicarbonate: step 2/3. Catalyzes the condensation of carbamoyl phosphate and aspartate to form carbamoyl aspartate and inorganic phosphate, the committed step in the de novo pyrimidine nucleotide biosynthesis pathway. This Methylibium petroleiphilum (strain ATCC BAA-1232 / LMG 22953 / PM1) protein is Aspartate carbamoyltransferase catalytic subunit.